Consider the following 635-residue polypeptide: Chaperone protein HtpG (635 aa).

The a; substrate-binding stretch occupies residues 1-336 (MTTAEAAAPE…SADLPLNLSR (336 aa)). Positions 337–556 (EMLQDSAILA…ESGIDRRLEK (220 aa)) are b. The segment at 557-635 (LLASAGRLGD…RVMQRGLPTA (79 aa)) is c.

This sequence belongs to the heat shock protein 90 family. As to quaternary structure, homodimer.

It localises to the cytoplasm. In terms of biological role, molecular chaperone. Has ATPase activity. This is Chaperone protein HtpG from Azorhizobium caulinodans (strain ATCC 43989 / DSM 5975 / JCM 20966 / LMG 6465 / NBRC 14845 / NCIMB 13405 / ORS 571).